A 297-amino-acid chain; its full sequence is 4-hydroxy-tetrahydrodipicolinate synthase (297 aa).

Thr49 contributes to the pyruvate binding site. Tyr137 acts as the Proton donor/acceptor in catalysis. The active-site Schiff-base intermediate with substrate is the Lys166. Residue Ile208 coordinates pyruvate.

The protein belongs to the DapA family. In terms of assembly, homotetramer; dimer of dimers.

It localises to the cytoplasm. The catalysed reaction is L-aspartate 4-semialdehyde + pyruvate = (2S,4S)-4-hydroxy-2,3,4,5-tetrahydrodipicolinate + H2O + H(+). Its pathway is amino-acid biosynthesis; L-lysine biosynthesis via DAP pathway; (S)-tetrahydrodipicolinate from L-aspartate: step 3/4. In terms of biological role, catalyzes the condensation of (S)-aspartate-beta-semialdehyde [(S)-ASA] and pyruvate to 4-hydroxy-tetrahydrodipicolinate (HTPA). The chain is 4-hydroxy-tetrahydrodipicolinate synthase from Chlorobium phaeobacteroides (strain BS1).